Reading from the N-terminus, the 807-residue chain is 85/88 kDa calcium-independent phospholipase A2 (807 aa).

At Ser-13 the chain carries Phosphoserine. 9 ANK repeats span residues 120-147 (WTVT…ANST), 151-181 (EGCT…QMDV), 185-215 (KGET…GLNQ), 219-248 (QGLT…RCNI), 251-281 (PGGF…QIHS), 286-312 (YGAS…DVDS), 316-345 (SGNT…NAGA), 349-378 (HGNT…EVDT), and 382-403 (FGET…KALL). Transmembrane regions (helical) follow at residues 481 to 501 (LLCL…LIAI) and 512 to 532 (LFDW…ILHS). The 185-residue stretch at 482–666 (LCLDGGGVKG…LANNPTLDAM (185 aa)) folds into the PNPLA domain. Positions 486 to 491 (GGGVKG) match the GXGXXG motif. Residues 518 to 522 (GTSTG) carry the GXSXG motif. The Nucleophile role is filled by Ser-520. Catalysis depends on Asp-653, which acts as the Proton acceptor. Positions 653 to 655 (DGG) match the DGA/G motif. Residues 678–687 (RKGQGNKVKK) are calmodulin-binding (1-9-14 motif). Residues 749-760 (AWCEMVGIQYFR) are calmodulin-binding (IQ motif).

In terms of assembly, homodimer formed by catalytic domains tightly interacting through a large hydrophobic interface. The contact area involves 3 alpha helices, several loops and a part of the beta sheet from each monomer. Both active sites of the dimer are in close proximity adopting an open conformation that provide sufficient space for phospholipid access and favoring cooperativity in deacylation-reacylation reactions. Each monomer has 9 ankyrin repeats stacked side-by-side in an elongated structure oriented outwards from the catalytic core. In terms of tissue distribution, expressed in pancreatic beta-cells. Expressed in skeletal muscle (at protein level).

The protein resides in the cytoplasm. It is found in the cell membrane. The protein localises to the mitochondrion. Its subcellular location is the cell projection. It localises to the pseudopodium. It catalyses the reaction a 1,2-diacyl-sn-glycero-3-phosphocholine + H2O = a 1-acyl-sn-glycero-3-phosphocholine + a fatty acid + H(+). The catalysed reaction is a 1-O-alkyl-2-acyl-sn-glycero-3-phosphocholine + H2O = a 1-O-alkyl-sn-glycero-3-phosphocholine + a fatty acid + H(+). It carries out the reaction 1,2-dihexadecanoyl-sn-glycero-3-phosphocholine + H2O = 1-hexadecanoyl-sn-glycero-3-phosphocholine + hexadecanoate + H(+). The enzyme catalyses 1-hexadecanoyl-2-(9Z-octadecenoyl)-sn-glycero-3-phosphocholine + H2O = 1-hexadecanoyl-sn-glycero-3-phosphocholine + (9Z)-octadecenoate + H(+). It catalyses the reaction 1-hexadecanoyl-2-(9Z,12Z-octadecadienoyl)-sn-glycero-3-phosphocholine + H2O = (9Z,12Z)-octadecadienoate + 1-hexadecanoyl-sn-glycero-3-phosphocholine + H(+). The catalysed reaction is 1-hexadecanoyl-2-(5Z,8Z,11Z,14Z-eicosatetraenoyl)-sn-glycero-3-phosphocholine + H2O = 1-hexadecanoyl-sn-glycero-3-phosphocholine + (5Z,8Z,11Z,14Z)-eicosatetraenoate + H(+). It carries out the reaction 1-octadecanoyl-2-(5Z,8Z,11Z,14Z-eicosatetraenoyl)-sn-glycero-3-phosphocholine + H2O = 1-octadecanoyl-sn-glycero-3-phosphocholine + (5Z,8Z,11Z,14Z)-eicosatetraenoate + H(+). The enzyme catalyses 1-hexadecanoyl-2-(5Z,8Z,11Z,14Z-eicosatetraenoyl)-sn-glycero-3-phosphoethanolamine + H2O = 1-hexadecanoyl-sn-glycero-3-phosphoethanolamine + (5Z,8Z,11Z,14Z)-eicosatetraenoate + H(+). It catalyses the reaction 1,2-dihexadecanoyl-sn-glycero-3-phosphate + H2O = 1-hexadecanoyl-sn-glycero-3-phosphate + hexadecanoate + H(+). The catalysed reaction is a 1-acyl-sn-glycero-3-phosphocholine + H2O = sn-glycerol 3-phosphocholine + a fatty acid + H(+). It carries out the reaction 1-hexadecanoyl-sn-glycero-3-phosphocholine + H2O = sn-glycerol 3-phosphocholine + hexadecanoate + H(+). The enzyme catalyses 1-(5Z,8Z,11Z,14Z-eicosatetraenoyl)-sn-glycero-3-phosphocholine + H2O = sn-glycerol 3-phosphocholine + (5Z,8Z,11Z,14Z)-eicosatetraenoate + H(+). It catalyses the reaction 2-(5Z,8Z,11Z,14Z)-eicosatetraenoyl-sn-glycero-3-phosphocholine + H2O = sn-glycerol 3-phosphocholine + (5Z,8Z,11Z,14Z)-eicosatetraenoate + H(+). The catalysed reaction is 1-O-hexadecyl-2-(5Z,8Z,11Z,14Z)-eicosatetraenoyl-sn-glycero-3-phosphocholine + H2O = 1-O-hexadecyl-sn-glycero-3-phosphocholine + (5Z,8Z,11Z,14Z)-eicosatetraenoate + H(+). It carries out the reaction 1-O-hexadecyl-2-acetyl-sn-glycero-3-phosphocholine + H2O = 1-O-hexadecyl-sn-glycero-3-phosphocholine + acetate + H(+). The enzyme catalyses hexadecanoyl-CoA + H2O = hexadecanoate + CoA + H(+). It catalyses the reaction 1',3'-bis[1,2-di-(9Z-octadecenoyl)-sn-glycero-3-phospho]-glycerol + H2O = 1'-[1,2-di-(9Z-octadecenoyl)-sn-glycero-3-phospho]-3'-[1-(9Z-octadecenoyl)-sn-glycero-3-phospho]-glycerol + (9Z)-octadecenoate + H(+). The catalysed reaction is 1'-[1,2-di-(9Z-octadecenoyl)-sn-glycero-3-phospho]-3'-[1-(9Z-octadecenoyl)-sn-glycero-3-phospho]-glycerol + H2O = 1',3'-bis-[1-(9Z-octadecenoyl)-sn-glycero-3-phospho]-glycerol + (9Z)-octadecenoate + H(+). It carries out the reaction 1',3'-bis-[1,2-di-(9Z,12Z-octadecadienoyl)-sn-glycero-3-phospho]-glycerol + H2O = 1'-[1,2-di-(9Z,12Z-octadecadienoyl)-sn-glycero-3-phospho]-3'-[1-(9Z,12Z-octadecadienoyl)-sn-glycero-3-phospho]-glycerol + (9Z,12Z)-octadecadienoate + H(+). The enzyme catalyses 1-octadecanoyl-2-(15-hydroxy-(5Z,8Z,11Z,13E)-eicosatetraenoyl)-sn-glycero-3-phosphoethanolamine + H2O = 1-octadecanoyl-sn-glycero-3-phosphoethanolamine + 15-hydroxy-(5Z,8Z,11Z,13E)-eicosatetraenoate + H(+). Its activity is regulated as follows. Activated by ATP. Inhibited by calcium-activated calmodulin. Inhibited by bromoenol lactone (BEL). In terms of biological role, calcium-independent phospholipase involved in phospholipid remodeling with implications in cellular membrane homeostasis, mitochondrial integrity and signal transduction. Hydrolyzes the ester bond of the fatty acyl group attached at sn-1 or sn-2 position of phospholipids (phospholipase A1 and A2 activity respectively), producing lysophospholipids that are used in deacylation-reacylation cycles. Hydrolyzes both saturated and unsaturated long fatty acyl chains in various glycerophospholipid classes such as phosphatidylcholines, phosphatidylethanolamines and phosphatidates, with a preference for hydrolysis at sn-2 position. Can further hydrolyze lysophospholipids carrying saturated fatty acyl chains (lysophospholipase activity). Upon oxidative stress, contributes to remodeling of mitochondrial phospholipids in pancreatic beta cells, in a repair mechanism to reduce oxidized lipid content. Preferentially hydrolyzes oxidized polyunsaturated fatty acyl chains from cardiolipins, yielding monolysocardiolipins that can be reacylated with unoxidized fatty acyls to regenerate native cardiolipin species. Hydrolyzes oxidized glycerophosphoethanolamines present in pancreatic islets, releasing oxidized polyunsaturated fatty acids such as hydroxyeicosatetraenoates (HETEs). Has thioesterase activity toward fatty-acyl CoA releasing CoA-SH known to facilitate fatty acid transport and beta-oxidation in mitochondria particularly in skeletal muscle. Plays a role in regulation of membrane dynamics and homeostasis. Selectively hydrolyzes sn-2 arachidonoyl group in plasmalogen phospholipids, structural components of lipid rafts and myelin. Regulates F-actin polymerization at the pseudopods, which is required for both speed and directionality of MCP1/CCL2-induced monocyte chemotaxis. Targets membrane phospholipids to produce potent lipid signaling messengers. Generates lysophosphatidate (LPA, 1-acyl-glycerol-3-phosphate), which acts via G-protein receptors in various cell types. Has phospholipase A2 activity toward platelet-activating factor (PAF, 1-O-alkyl-2-acetyl-sn-glycero-3-phosphocholine), likely playing a role in inactivation of this potent pro-inflammatory signaling lipid. In response to glucose, amplifies calcium influx in pancreatic beta cells to promote INS secretion. This Rattus norvegicus (Rat) protein is 85/88 kDa calcium-independent phospholipase A2 (Pla2g6).